A 121-amino-acid polypeptide reads, in one-letter code: Large-conductance mechanosensitive channel (121 aa).

The next 2 membrane-spanning stretches (helical) occupy residues valine 14–leucine 34 and glycine 67–isoleucine 87.

The protein belongs to the MscL family. As to quaternary structure, homopentamer.

The protein localises to the cell membrane. Its function is as follows. Channel that opens in response to stretch forces in the membrane lipid bilayer. May participate in the regulation of osmotic pressure changes within the cell. This chain is Large-conductance mechanosensitive channel, found in Lactococcus lactis subsp. cremoris (strain SK11).